A 1021-amino-acid polypeptide reads, in one-letter code: Probable calcium-transporting ATPase 6, plasma membrane-type (1021 aa).

Over Met-1 to Ala-155 the chain is Cytoplasmic. The next 2 helical transmembrane spans lie at Leu-156–Leu-176 and Trp-181–Val-201. Residues Thr-202–Leu-241 lie on the Cytoplasmic side of the membrane. The next 2 helical transmembrane spans lie at Val-242 to Ile-262 and Val-338 to Leu-358. Topologically, residues Ala-359–Asn-384 are cytoplasmic. Residues Tyr-385–Val-405 form a helical membrane-spanning segment. Catalysis depends on Asp-441, which acts as the 4-aspartylphosphate intermediate. The Mg(2+) site is built by Asp-740 and Asp-744. The helical transmembrane segment at Ile-807–Ala-827 threads the bilayer. The Cytoplasmic portion of the chain corresponds to Val-828 to Gln-829. 2 helical membrane-spanning segments follow: residues Leu-830–Pro-850 and Gly-879–Ile-899. Topologically, residues Glu-900–Asn-942 are cytoplasmic. The next 2 membrane-spanning stretches (helical) occupy residues Trp-943–Leu-963 and Gly-974–Leu-994. At Lys-995 to Leu-1021 the chain is on the cytoplasmic side.

This sequence belongs to the cation transport ATPase (P-type) (TC 3.A.3) family. Type IIB subfamily.

The protein resides in the membrane. It carries out the reaction Ca(2+)(in) + ATP + H2O = Ca(2+)(out) + ADP + phosphate + H(+). Its activity is regulated as follows. Activated by calmodulin. Its function is as follows. This magnesium-dependent enzyme catalyzes the hydrolysis of ATP coupled with the translocation of calcium from the cytosol out of the cell, into the endoplasmic reticulum, or into organelles. The chain is Probable calcium-transporting ATPase 6, plasma membrane-type from Oryza sativa subsp. japonica (Rice).